A 499-amino-acid chain; its full sequence is Glycerol kinase (499 aa).

Threonine 13 is an ADP binding site. ATP-binding residues include threonine 13, threonine 14, and serine 15. Threonine 13 is a binding site for sn-glycerol 3-phosphate. Residue arginine 17 coordinates ADP. Residues arginine 83, glutamate 84, tyrosine 135, and aspartate 245 each coordinate sn-glycerol 3-phosphate. Glycerol contacts are provided by arginine 83, glutamate 84, tyrosine 135, aspartate 245, and glutamine 246. Threonine 267 and glycine 310 together coordinate ADP. ATP-binding residues include threonine 267, glycine 310, glutamine 314, and glycine 411. The ADP site is built by glycine 411 and asparagine 415.

This sequence belongs to the FGGY kinase family.

The catalysed reaction is glycerol + ATP = sn-glycerol 3-phosphate + ADP + H(+). It functions in the pathway polyol metabolism; glycerol degradation via glycerol kinase pathway; sn-glycerol 3-phosphate from glycerol: step 1/1. Inhibited by fructose 1,6-bisphosphate (FBP). Key enzyme in the regulation of glycerol uptake and metabolism. Catalyzes the phosphorylation of glycerol to yield sn-glycerol 3-phosphate. The chain is Glycerol kinase from Xanthomonas axonopodis pv. citri (strain 306).